Consider the following 132-residue polypeptide: Transmembrane protein 170B (132 aa).

The Extracellular portion of the chain corresponds to 1–37 (MRAEGADHSMINLSVQQVLSLWAHGTVLRNLTEMWYW). A glycan (N-linked (GlcNAc...) asparagine) is linked at Asn-12. A helical membrane pass occupies residues 38 to 58 (IFLWALFSSLFVHGAAGVLMF). Residues 59-68 (VMLQRHRQGR) are Cytoplasmic-facing. Residues 69-89 (VLSIIAVSIGFLASVTGAMIT) form a helical membrane-spanning segment. At 90-104 (SAAVAGIYRVAGKNM) the chain is on the extracellular side. A helical transmembrane segment spans residues 105–125 (APLEALVWGVGQTVLTLIISF). Topologically, residues 126–132 (SRILATL) are cytoplasmic.

Belongs to the TMEM170 family. As to quaternary structure, interacts with CTNNB1.

The protein resides in the cell membrane. The chain is Transmembrane protein 170B (Tmem170b) from Rattus norvegicus (Rat).